A 102-amino-acid polypeptide reads, in one-letter code: Large ribosomal subunit protein bL21 (102 aa).

This sequence belongs to the bacterial ribosomal protein bL21 family. As to quaternary structure, part of the 50S ribosomal subunit. Contacts protein L20.

Its function is as follows. This protein binds to 23S rRNA in the presence of protein L20. The protein is Large ribosomal subunit protein bL21 of Nitratiruptor sp. (strain SB155-2).